A 215-amino-acid chain; its full sequence is Adenylate kinase (215 aa).

10–15 contacts ATP; the sequence is GCGKGT. Residues 30 to 59 form an NMP region; that stretch reads STGDIFRQTIDQKGPYWEELKSYISKGLLV. AMP contacts are provided by residues Thr-31, Arg-36, 57–59, and Gln-91; that span reads LLV. Positions 120-157 are LID; sequence GRRICSKCKRIYNIHYSAPKKEDICDDDGEFLIQRKDD. Arg-121 contributes to the ATP binding site. Residues Cys-124 and Cys-127 each contribute to the Zn(2+) site. 130-131 serves as a coordination point for ATP; sequence IY. Zn(2+)-binding residues include Cys-144 and Asp-147. AMP is bound by residues Arg-154 and Arg-165.

Belongs to the adenylate kinase family. As to quaternary structure, monomer.

It localises to the cytoplasm. The catalysed reaction is AMP + ATP = 2 ADP. It participates in purine metabolism; AMP biosynthesis via salvage pathway; AMP from ADP: step 1/1. In terms of biological role, catalyzes the reversible transfer of the terminal phosphate group between ATP and AMP. Plays an important role in cellular energy homeostasis and in adenine nucleotide metabolism. This chain is Adenylate kinase, found in Malacoplasma penetrans (strain HF-2) (Mycoplasma penetrans).